The sequence spans 115 residues: Large ribosomal subunit protein eL30 (115 aa).

Belongs to the eukaryotic ribosomal protein eL30 family. As to quaternary structure, component of the large ribosomal subunit.

Its subcellular location is the cytoplasm. In terms of biological role, component of the large ribosomal subunit. The ribosome is a large ribonucleoprotein complex responsible for the synthesis of proteins in the cell. In Gallus gallus (Chicken), this protein is Large ribosomal subunit protein eL30 (RPL30).